Reading from the N-terminus, the 890-residue chain is Alanine--tRNA ligase (890 aa).

4 residues coordinate Zn(2+): His-567, His-571, Cys-680, and His-684.

It belongs to the class-II aminoacyl-tRNA synthetase family. Zn(2+) serves as cofactor.

The protein resides in the cytoplasm. It carries out the reaction tRNA(Ala) + L-alanine + ATP = L-alanyl-tRNA(Ala) + AMP + diphosphate. Catalyzes the attachment of alanine to tRNA(Ala) in a two-step reaction: alanine is first activated by ATP to form Ala-AMP and then transferred to the acceptor end of tRNA(Ala). Also edits incorrectly charged Ser-tRNA(Ala) and Gly-tRNA(Ala) via its editing domain. The chain is Alanine--tRNA ligase from Ruegeria pomeroyi (strain ATCC 700808 / DSM 15171 / DSS-3) (Silicibacter pomeroyi).